Reading from the N-terminus, the 259-residue chain is Imidazole glycerol phosphate synthase subunit HisF (259 aa).

Active-site residues include Asp-11 and Asp-130.

The protein belongs to the HisA/HisF family. As to quaternary structure, heterodimer of HisH and HisF.

The protein localises to the cytoplasm. It catalyses the reaction 5-[(5-phospho-1-deoxy-D-ribulos-1-ylimino)methylamino]-1-(5-phospho-beta-D-ribosyl)imidazole-4-carboxamide + L-glutamine = D-erythro-1-(imidazol-4-yl)glycerol 3-phosphate + 5-amino-1-(5-phospho-beta-D-ribosyl)imidazole-4-carboxamide + L-glutamate + H(+). It functions in the pathway amino-acid biosynthesis; L-histidine biosynthesis; L-histidine from 5-phospho-alpha-D-ribose 1-diphosphate: step 5/9. IGPS catalyzes the conversion of PRFAR and glutamine to IGP, AICAR and glutamate. The HisF subunit catalyzes the cyclization activity that produces IGP and AICAR from PRFAR using the ammonia provided by the HisH subunit. The protein is Imidazole glycerol phosphate synthase subunit HisF of Lactococcus lactis subsp. cremoris (strain MG1363).